The chain runs to 394 residues: Protein-glutamate methylesterase/protein-glutamine glutaminase (394 aa).

Residues 1–24 are disordered; sequence MSDGFGRPPPPAPAGHPTGAAGGD. The span at 15-24 shows a compositional bias: low complexity; it reads GHPTGAAGGD. The 119-residue stretch at 27 to 145 folds into the Response regulatory domain; it reads RVMVVDDSAV…EIGGADAFKR (119 aa). At D78 the chain carries 4-aspartylphosphate. The CheB-type methylesterase domain occupies 191–393; sequence PAPAVGSVGQ…PYIRKFASRA (203 aa). Residues S211, H238, and D335 contribute to the active site.

The protein belongs to the CheB family. Post-translationally, phosphorylated by CheA. Phosphorylation of the N-terminal regulatory domain activates the methylesterase activity.

It is found in the cytoplasm. It catalyses the reaction [protein]-L-glutamate 5-O-methyl ester + H2O = L-glutamyl-[protein] + methanol + H(+). The catalysed reaction is L-glutaminyl-[protein] + H2O = L-glutamyl-[protein] + NH4(+). Its function is as follows. Involved in chemotaxis. Part of a chemotaxis signal transduction system that modulates chemotaxis in response to various stimuli. Catalyzes the demethylation of specific methylglutamate residues introduced into the chemoreceptors (methyl-accepting chemotaxis proteins or MCP) by CheR. Also mediates the irreversible deamidation of specific glutamine residues to glutamic acid. In Azospirillum brasilense, this protein is Protein-glutamate methylesterase/protein-glutamine glutaminase.